The following is a 303-amino-acid chain: E3 ubiquitin-protein ligase SINA-like 3 (303 aa).

The segment at 1–30 (MENITNNSERSLDRPKRQRPVSMENVGGTA) is disordered. Residues 49 to 85 (CPICYHKLGAPIYQCDNGHIACSSCCKKVKYKCPYCS) form an RING-type zinc finger. The tract at residues 99–286 (IVEAVVVSCP…MSIPYYLLDE (188 aa)) is SBD. The SIAH-type zinc-finger motif lies at 102–162 (AVVVSCPNAK…LYRHYHAEHK (61 aa)). Zn(2+) contacts are provided by Cys107, Cys114, His128, Cys132, Cys139, Cys144, His156, and His161.

This sequence belongs to the SINA (Seven in absentia) family.

The enzyme catalyses S-ubiquitinyl-[E2 ubiquitin-conjugating enzyme]-L-cysteine + [acceptor protein]-L-lysine = [E2 ubiquitin-conjugating enzyme]-L-cysteine + N(6)-ubiquitinyl-[acceptor protein]-L-lysine.. It participates in protein modification; protein ubiquitination. In terms of biological role, E3 ubiquitin-protein ligase that mediates ubiquitination and subsequent proteasomal degradation of target proteins. E3 ubiquitin ligases accept ubiquitin from an E2 ubiquitin-conjugating enzyme in the form of a thioester and then directly transfers the ubiquitin to targeted substrates. It probably triggers the ubiquitin-mediated degradation of different substrates. The chain is E3 ubiquitin-protein ligase SINA-like 3 from Arabidopsis thaliana (Mouse-ear cress).